A 310-amino-acid chain; its full sequence is Pirin-like protein At1g50590 (310 aa).

The protein belongs to the pirin family.

It is found in the nucleus. This Arabidopsis thaliana (Mouse-ear cress) protein is Pirin-like protein At1g50590.